Consider the following 138-residue polypeptide: Thioredoxin H2-1 (138 aa).

The interval 1–20 is disordered; sequence MGGAFSTSKPKPAAGEEGGE. Residues 12–129 form the Thioredoxin domain; the sequence is PAAGEEGGES…LEKTINTLRS (118 aa). Catalysis depends on nucleophile residues cysteine 55 and cysteine 58. Residues cysteine 55 and cysteine 58 are joined by a disulfide bond.

The protein belongs to the thioredoxin family. Plant H-type subfamily.

It is found in the cytoplasm. Functionally, probable thiol-disulfide oxidoreductase that may be involved in the redox regulation of a number of cytosolic enzymes. The polypeptide is Thioredoxin H2-1 (Oryza sativa subsp. japonica (Rice)).